The primary structure comprises 251 residues: 1-(5-phosphoribosyl)-5-[(5-phosphoribosylamino)methylideneamino] imidazole-4-carboxamide isomerase (251 aa).

Residue Asp-8 is the Proton acceptor of the active site. The active-site Proton donor is Asp-129.

This sequence belongs to the HisA/HisF family.

The protein resides in the cytoplasm. It catalyses the reaction 1-(5-phospho-beta-D-ribosyl)-5-[(5-phospho-beta-D-ribosylamino)methylideneamino]imidazole-4-carboxamide = 5-[(5-phospho-1-deoxy-D-ribulos-1-ylimino)methylamino]-1-(5-phospho-beta-D-ribosyl)imidazole-4-carboxamide. It participates in amino-acid biosynthesis; L-histidine biosynthesis; L-histidine from 5-phospho-alpha-D-ribose 1-diphosphate: step 4/9. The sequence is that of 1-(5-phosphoribosyl)-5-[(5-phosphoribosylamino)methylideneamino] imidazole-4-carboxamide isomerase from Desulfosudis oleivorans (strain DSM 6200 / JCM 39069 / Hxd3) (Desulfococcus oleovorans).